The chain runs to 451 residues: UPF0210 protein LMHCC_2097 (451 aa).

Belongs to the UPF0210 family. As to quaternary structure, homodimer.

The chain is UPF0210 protein LMHCC_2097 from Listeria monocytogenes serotype 4a (strain HCC23).